Consider the following 701-residue polypeptide: Transcription factor PDR8 (701 aa).

The segment at 1-22 is disordered; it reads MDGSHFPMKSTTGEPVSSGKKG. The segment at residues 31–59 is a DNA-binding region (zn(2)-C6 fungal-type); the sequence is CAFCRKRKLKCSQARPMCQQCVIRKLPQC.

It is found in the cytoplasm. The protein localises to the nucleus. In terms of biological role, up-regulates the transcription of the genes for ATP-binding cassette (ABC) transporters YOR1 and PDR15, for major facilitator superfamily transporter AZR1, for pleiotropic drug resistance SNG1, for alpha-glucosidase YJL216C and for YLL056C. The protein is Transcription factor PDR8 (PDR8) of Saccharomyces cerevisiae (strain ATCC 204508 / S288c) (Baker's yeast).